The sequence spans 260 residues: Triosephosphate isomerase (260 aa).

Asn-11 to Lys-13 provides a ligand contact to substrate. The active-site Electrophile is the His-103. The active-site Proton acceptor is the Glu-175. Residues Gly-181, Ser-220, and Gly-241–Gly-242 each bind substrate.

Belongs to the triosephosphate isomerase family. Homodimer.

The protein resides in the cytoplasm. The catalysed reaction is D-glyceraldehyde 3-phosphate = dihydroxyacetone phosphate. It participates in carbohydrate biosynthesis; gluconeogenesis. Its pathway is carbohydrate degradation; glycolysis; D-glyceraldehyde 3-phosphate from glycerone phosphate: step 1/1. Functionally, involved in the gluconeogenesis. Catalyzes stereospecifically the conversion of dihydroxyacetone phosphate (DHAP) to D-glyceraldehyde-3-phosphate (G3P). This chain is Triosephosphate isomerase, found in Shewanella amazonensis (strain ATCC BAA-1098 / SB2B).